A 212-amino-acid polypeptide reads, in one-letter code: Large ribosomal subunit protein uL3 (212 aa).

Positions lysine 130–proline 158 are disordered.

Belongs to the universal ribosomal protein uL3 family. Part of the 50S ribosomal subunit. Forms a cluster with proteins L14 and L19.

One of the primary rRNA binding proteins, it binds directly near the 3'-end of the 23S rRNA, where it nucleates assembly of the 50S subunit. This Gloeothece citriformis (strain PCC 7424) (Cyanothece sp. (strain PCC 7424)) protein is Large ribosomal subunit protein uL3.